A 547-amino-acid polypeptide reads, in one-letter code: Chaperonin GroEL (547 aa).

ATP-binding positions include 30-33 (TLGP), Lys-51, 87-91 (DGTTT), Gly-415, 479-481 (NAA), and Asp-495.

It belongs to the chaperonin (HSP60) family. As to quaternary structure, forms a cylinder of 14 subunits composed of two heptameric rings stacked back-to-back. Interacts with the co-chaperonin GroES.

It is found in the cytoplasm. The catalysed reaction is ATP + H2O + a folded polypeptide = ADP + phosphate + an unfolded polypeptide.. Together with its co-chaperonin GroES, plays an essential role in assisting protein folding. The GroEL-GroES system forms a nano-cage that allows encapsulation of the non-native substrate proteins and provides a physical environment optimized to promote and accelerate protein folding. In Bordetella bronchiseptica (strain ATCC BAA-588 / NCTC 13252 / RB50) (Alcaligenes bronchisepticus), this protein is Chaperonin GroEL.